Here is a 228-residue protein sequence, read N- to C-terminus: Phosphoglycolate phosphatase (228 aa).

Catalysis depends on Asp-9, which acts as the Nucleophile. Residues Asp-9 and Asp-11 each contribute to the Mg(2+) site. A substrate-binding site is contributed by Lys-151. Residues Asp-174 and Asp-178 each contribute to the Mg(2+) site.

It belongs to the archaeal SPP-like hydrolase family. Requires Mg(2+) as cofactor.

It catalyses the reaction 2-phosphoglycolate + H2O = glycolate + phosphate. In terms of biological role, catalyzes the dephosphorylation of 2-phosphoglycolate. The sequence is that of Phosphoglycolate phosphatase from Pyrobaculum aerophilum (strain ATCC 51768 / DSM 7523 / JCM 9630 / CIP 104966 / NBRC 100827 / IM2).